A 600-amino-acid chain; its full sequence is Putative dehydrogenase XoxF (600 aa).

A signal peptide spans Met-1–Ala-21. The Ca(2+) site is built by Glu-192 and Asn-276. Residue Asp-318 is the Proton acceptor of the active site.

The protein belongs to the bacterial PQQ dehydrogenase family. Requires pyrroloquinoline quinone as cofactor. Ca(2+) serves as cofactor.

This chain is Putative dehydrogenase XoxF (xoxF), found in Paracoccus denitrificans.